Here is a 96-residue protein sequence, read N- to C-terminus: Small ribosomal subunit protein uS19 (96 aa).

The protein belongs to the universal ribosomal protein uS19 family.

In terms of biological role, protein S19 forms a complex with S13 that binds strongly to the 16S ribosomal RNA. In Gemmatimonas aurantiaca (strain DSM 14586 / JCM 11422 / NBRC 100505 / T-27), this protein is Small ribosomal subunit protein uS19.